We begin with the raw amino-acid sequence, 201 residues long: Glycerol-3-phosphate acyltransferase (201 aa).

Helical transmembrane passes span 10–30, 60–80, 86–106, 116–136, and 166–186; these read MLIG…GLIL, LAAA…LIAA, AAIA…WIGF, LGVL…AWIV, and ALAA…RANI.

It belongs to the PlsY family. Probably interacts with PlsX.

It is found in the cell inner membrane. The enzyme catalyses an acyl phosphate + sn-glycerol 3-phosphate = a 1-acyl-sn-glycero-3-phosphate + phosphate. The protein operates within lipid metabolism; phospholipid metabolism. In terms of biological role, catalyzes the transfer of an acyl group from acyl-phosphate (acyl-PO(4)) to glycerol-3-phosphate (G3P) to form lysophosphatidic acid (LPA). This enzyme utilizes acyl-phosphate as fatty acyl donor, but not acyl-CoA or acyl-ACP. This chain is Glycerol-3-phosphate acyltransferase, found in Brucella abortus (strain 2308).